The sequence spans 612 residues: C4-dicarboxylate transport sensor protein DctB (612 aa).

2 helical membrane-spanning segments follow: residues 23 to 43 (SLVI…YFAE) and 292 to 312 (VLLI…LLTL). A coiled-coil region spans residues 328-376 (KRQLEERVLERTRELENANAQLQQEVHEREQAQRELMRAQDEVVQAGKL). The region spanning 385-599 (SISHELNQPL…VVRLHLLPGV (215 aa)) is the Histidine kinase domain. His-388 is subject to Phosphohistidine; by autocatalysis.

In terms of processing, autophosphorylated.

The protein resides in the cell inner membrane. The enzyme catalyses ATP + protein L-histidine = ADP + protein N-phospho-L-histidine.. Functionally, member of the two-component regulatory system DctB/DctD, which regulates C4-dicarboxylate transport via regulation of expression of the dctPQM operon and dctA. DctB functions as a membrane-associated protein kinase that phosphorylates DctD in response to environmental signals. This chain is C4-dicarboxylate transport sensor protein DctB, found in Pseudomonas aeruginosa (strain ATCC 15692 / DSM 22644 / CIP 104116 / JCM 14847 / LMG 12228 / 1C / PRS 101 / PAO1).